The sequence spans 689 residues: MNSKARSLLWTIRRFSTLLPRSRALRIDPLGTCRPEVIHSKWNPRNHRLNVFDEGLQPSVRYLFQDIFISKSVDGCIQTKGISHSAVFKPDRLLCPRRLSFDAKHSFVSDGTSDHDLKKINFHHTSSEDVFTKKVRPTPVNYKKLAQECNSLSDVLDTFSKAPTFPGSNYFLAMWIIAKRISEDKRRFERQLMFSHPAFNQLCEQMMREAKIMHYDHLLFSLNAIVKLGIPQNTLMVQTLLRTIQERINECDERCLSILSTALVSMEPCMNVNALRAGLRILVDQQVWNIKHVFTLQTVMKCIGKDAPSALKKKLEMKALKELGRFSILNSQHMFEVLAAMDLRSVVLLNECSKVVIDNVHGCPFKVLISILQSCRDLRYQNEDLFKSIAEYVATTFDIWKLKQVIFFLLLFETLGFRPPGLMDKLMEKVVQEPGSLNVKNIVSILHVYSSLNHVHKIHNREFLEALASALTGCLHHISSESLLNAVHSFCMMNYFPLAPINQLIKENIINELLTSGDTEKNIHKLHVLNTCLKLDESTYKSVHIPLPQLPLSASQPNEKLAEVLSRLLEGEGRFSRNVPLPHNYHIDFEIRMDTNRTQVFSFSDVDASSATNMQRVAVLCVPKSVYCLNSCHPRGLMAMKIRHLNVMGFHVILIHNWELKKLKMEDAVTFVRKKIYSDEVLPTADTTV.

2 positions are modified to phosphoserine: S113 and S126. Residues 617–674 (VAVLCVPKSVYCLNSCHPRGLMAMKIRHLNVMGFHVILIHNWELKKLKMEDAVTFVRK) enclose the RAP domain.

This sequence belongs to the FAST kinase family. In terms of assembly, monomer. Found in a complex with GRSF1, DDX28, DHX30 and FASTKD5. Associates with the 16S mitochondrial rRNA (16S mt-rRNA). Forms a regulatory protein-RNA complex, consisting of RCC1L, NGRN, RPUSD3, RPUSD4, TRUB2, FASTKD2 and 16S mt-rRNA. Ubiquitously expressed. Expression detected in spleen, testis, colon, heart, smooth muscle, kidney, brain, lung, liver, brown and white adipose tissue with highest expression in testis, heart and smooth muscle.

It is found in the mitochondrion matrix. It localises to the mitochondrion nucleoid. Its function is as follows. Plays an important role in assembly of the mitochondrial large ribosomal subunit. As a component of a functional protein-RNA module, consisting of RCC1L, NGRN, RPUSD3, RPUSD4, TRUB2, FASTKD2 and 16S mitochondrial ribosomal RNA (16S mt-rRNA), controls 16S mt-rRNA abundance and is required for intra-mitochondrial translation. May play a role in mitochondrial apoptosis. This chain is FAST kinase domain-containing protein 2, mitochondrial (Fastkd2), found in Mus musculus (Mouse).